We begin with the raw amino-acid sequence, 101 residues long: Protein SPIRAL1-like 3 (101 aa).

Residues 1-22 are compositionally biased toward gly residues; that stretch reads MGRGVSSGGGQSSLGYLFGGGE. Disordered stretches follow at residues 1-54 and 73-101; these read MGRG…GIQS and TDRP…KDGK.

The protein belongs to the SPIRAL1 family.

Functionally, acts in maintaining the cortical microtubules organization essential for anisotropic cell growth. This Oryza sativa subsp. japonica (Rice) protein is Protein SPIRAL1-like 3.